Here is a 248-residue protein sequence, read N- to C-terminus: Pyridoxine 5'-phosphate synthase (248 aa).

Positions 8 and 19 each coordinate 3-amino-2-oxopropyl phosphate. The active-site Proton acceptor is His44. 1-deoxy-D-xylulose 5-phosphate contacts are provided by Arg46 and His51. The active-site Proton acceptor is the Glu76. 1-deoxy-D-xylulose 5-phosphate is bound at residue Thr106. His200 acts as the Proton donor in catalysis. 3-amino-2-oxopropyl phosphate-binding positions include Asp201 and 223–224 (GH).

This sequence belongs to the PNP synthase family. As to quaternary structure, homooctamer; tetramer of dimers.

Its subcellular location is the cytoplasm. It catalyses the reaction 3-amino-2-oxopropyl phosphate + 1-deoxy-D-xylulose 5-phosphate = pyridoxine 5'-phosphate + phosphate + 2 H2O + H(+). It functions in the pathway cofactor biosynthesis; pyridoxine 5'-phosphate biosynthesis; pyridoxine 5'-phosphate from D-erythrose 4-phosphate: step 5/5. Catalyzes the complicated ring closure reaction between the two acyclic compounds 1-deoxy-D-xylulose-5-phosphate (DXP) and 3-amino-2-oxopropyl phosphate (1-amino-acetone-3-phosphate or AAP) to form pyridoxine 5'-phosphate (PNP) and inorganic phosphate. The polypeptide is Pyridoxine 5'-phosphate synthase (Chelativorans sp. (strain BNC1)).